Here is a 1345-residue protein sequence, read N- to C-terminus: MTRDSKKKHHWGTAFLRTIGVKRKHKKDRNFLNNTTGENVSTTASAERFRRVGGNPDIPSLLKPETFTESPAKGSQKAAASSLAHSQGVFNIPIVIDPMETNRLEKTNTNLTAGSLKGRFQDGNSNSNSVPSLSVQALEKEKLQSGKREGSSNQAEEKTPDGHDEHTAFETFLSFAHNAVSHIPKINVQDADNGTISRNEPKDRKKNSSNISGALSENSTNNKNTSSTKESDGPFLKNLDNILAASKSSTPSNQQLNTTEAGSKSKPSSLSRLAFGNLKGHIHSNSHSSSNAISGDDTSLDDTRKMTDDMARKVVFEPIRHSHDKPTPGVGNLKLEHFDDSQATLEGLEAMSAESLPEADHLDSRGPVQQSNLERKTVPSKWSVVSSSTTDGVKPRRRAKSMISAMADKQNTSSDVLQDCKKRLSFNSSNGLTNNDPEYEDREPREMSKKFLNRRSFSPGSISMGMKVLPSTALKYSLNKVKNSTDIASTIIPRPSMSNGRPSSGLRRSSSKSFSSTPVNIIEPSEENGRQSSIRIKGVEYASEKKDAEFHAIFKDSGVSPNERLILDHSCALSRDILLQGRMYISDQHIGFYSNILGWVSTVFIPFKTIVQIEKRATAGIFPNGIVIDTLHTKYTFASFTSRDATYDLITEVWNQIILGKRFRSNSNNTNSSSNSISDDENDDYDDDYDDYGDDDDDLYDNSNNISDSTDMTSSVSIGKPEDLPMPLQTDTPYGTGIPPLGPKIHSPTETVYKPAPNEKLVNESTIHASLGRVVNILFGKDVSYIMAILKAQKNSDISPIPVLVDSPTVSEGKKRDYSYVKTTPGAIGPGKTKCMITETIQHFNLEEYVQVLQTTKTPDVPSGNSFYVRTVYLLSWANNNETKLKLYVSVEWTGKSLIKSPIEKGTFDGVTDATKILVEELGNILTRSATKRKRSSKENTVTVSTLPKMEPSSHAPTEPDIQKDKDDSIIRENENIPAPLGTVVQLLFGSNTEYMQKVITRDKNNVNVETIPKFTPSLVEGGSRHYEYTKKLNNSIGPKQTKCLLTESIEHMDINNYVLVTQTTKTPDVPSGSNFAVESKIFLFWGQHDTTNMTVITKINWTSKSFLKGAIEKGSVEGQKVSVDYMLSELRDIISRAKSKKPVKKVMKSHDKHRPFHSKVEQKSSESRKSDDNKDILTHILDFVQNNFSSEIFMNKLLSPQKLFLILGLTIMLFWSPRLHVFQEKNNLQIIKPGRLLIDGQEYNYVPSFGTLYNSYENAISSKKKRENVNYARDKSPIVGRESDIWDWISNRGSAISPRGRAMLRNDDEHKLQQLSESIKITEMQLNHMKTMLDNIERDANDLS.

Residues 1-1197 (MTRDSKKKHH…NFSSEIFMNK (1197 aa)) are Cytoplasmic-facing. Disordered regions lie at residues 51–80 (RVGG…KAAA), 115–134 (SLKG…PSLS), 139–164 (EKEK…DGHD), 190–302 (DADN…SLDD), 356–397 (LPEA…KPRR), 425–447 (SFNS…PREM), and 489–531 (STII…NGRQ). A Phosphothreonine modification is found at T66. Residues 216-228 (SENSTNNKNTSST) show a composition bias toward low complexity. Residues 246–271 (SKSSTPSNQQLNTTEAGSKSKPSSLS) are compositionally biased toward polar residues. Over residues 283-294 (HSNSHSSSNAIS) the composition is skewed to low complexity. Polar residues predominate over residues 425–436 (SFNSSNGLTNND). The span at 498–516 (SNGRPSSGLRRSSSKSFSS) shows a compositional bias: low complexity. Residues 549–616 (EFHAIFKDSG…FKTIVQIEKR (68 aa)) form the GRAM domain. Over residues 665 to 677 (SNSNNTNSSSNSI) the composition is skewed to low complexity. A disordered region spans residues 665–722 (SNSNNTNSSSNSISDDENDDYDDDYDDYGDDDDDLYDNSNNISDSTDMTSSVSIGKPE). The span at 678-700 (SDDENDDYDDDYDDYGDDDDDLY) shows a compositional bias: acidic residues. Residue S747 is modified to Phosphoserine. 2 VASt domains span residues 758-930 (NEKL…TRSA) and 967-1139 (DDSI…SRAK). Positions 930–963 (ATKRKRSSKENTVTVSTLPKMEPSSHAPTEPDIQ) are disordered. A compositionally biased stretch (basic residues) spans 1141–1158 (KKPVKKVMKSHDKHRPFH). The disordered stretch occupies residues 1141-1172 (KKPVKKVMKSHDKHRPFHSKVEQKSSESRKSD). Residues 1159–1172 (SKVEQKSSESRKSD) are compositionally biased toward basic and acidic residues. A helical transmembrane segment spans residues 1198–1218 (LLSPQKLFLILGLTIMLFWSP). The Lumenal portion of the chain corresponds to 1219 to 1345 (RLHVFQEKNN…NIERDANDLS (127 aa)).

This sequence belongs to the YSP2 family.

It localises to the endoplasmic reticulum membrane. Its function is as follows. May be involved in sterol transfer between intracellular membranes. The chain is Membrane-anchored lipid-binding protein LAM4 from Saccharomyces cerevisiae (strain ATCC 204508 / S288c) (Baker's yeast).